The chain runs to 297 residues: 4-hydroxybenzoate octaprenyltransferase (297 aa).

9 helical membrane-spanning segments follow: residues 29–49 (IGTYLLLWPTLWALWIAAEGV), 55–75 (LFIFITGVILMRAAGCVVNDF), 102–122 (AWTLFAVLVGLSFGLVLLTNA), 124–141 (TVYLSFGALALAACYPFM), 146–166 (FYPQVVLGAAFSWGMPMAFTA), 169–189 (GSLPPEAWLLFIANLLWTVAY), 219–239 (VIIVTLQGLALFCLLLAGVRF), 241–261 (LGQWFHLGLVIAAGCFAWEFW), and 270–290 (VCFKAFLHNHWAGLAILAGIV).

Belongs to the UbiA prenyltransferase family. It depends on Mg(2+) as a cofactor.

The protein resides in the cell inner membrane. It carries out the reaction all-trans-octaprenyl diphosphate + 4-hydroxybenzoate = 4-hydroxy-3-(all-trans-octaprenyl)benzoate + diphosphate. It participates in cofactor biosynthesis; ubiquinone biosynthesis. In terms of biological role, catalyzes the prenylation of para-hydroxybenzoate (PHB) with an all-trans polyprenyl group. Mediates the second step in the final reaction sequence of ubiquinone-8 (UQ-8) biosynthesis, which is the condensation of the polyisoprenoid side chain with PHB, generating the first membrane-bound Q intermediate 3-octaprenyl-4-hydroxybenzoate. In Stutzerimonas stutzeri (strain A1501) (Pseudomonas stutzeri), this protein is 4-hydroxybenzoate octaprenyltransferase.